A 49-amino-acid polypeptide reads, in one-letter code: MRIHVVLGNDETGERIYLTSKNRRNTPDRLELKKYSPKLRKVVTFKEIK.

This sequence belongs to the bacterial ribosomal protein bL33 family.

This chain is Large ribosomal subunit protein bL33, found in Leuconostoc citreum (strain KM20).